The sequence spans 535 residues: Dimethylaniline monooxygenase [N-oxide-forming] 2 (535 aa).

FAD-binding positions include 9–13, Glu-32, 40–41, and 61–62; these read GAGVS, LW, and NT. Residues 60 to 61 and 195 to 198 contribute to the NADP(+) site; these read TN and SAAD. Lys-492 is covalently cross-linked (Glycyl lysine isopeptide (Lys-Gly) (interchain with G-Cter in SUMO)). A helical transmembrane segment spans residues 510 to 530; sequence APVSFLIKVLGLLAIVLAFFF.

This sequence belongs to the FMO family. FAD serves as cofactor. It depends on Mg(2+) as a cofactor.

The protein localises to the microsome membrane. It localises to the endoplasmic reticulum membrane. Its function is as follows. Catalyzes the oxidative metabolism of numerous xenobiotics, including mainly therapeutic drugs and insecticides that contain a soft nucleophile, most commonly nitrogen and sulfur and participates to their bioactivation. This Rattus norvegicus (Rat) protein is Dimethylaniline monooxygenase [N-oxide-forming] 2.